A 354-amino-acid polypeptide reads, in one-letter code: Fe(3+) ions import ATP-binding protein FbpC (354 aa).

Positions 4–236 (LELHAVHKSF…PRDAQTALFL (233 aa)) constitute an ABC transporter domain. 36 to 43 (GPSGSGKT) serves as a coordination point for ATP.

This sequence belongs to the ABC transporter superfamily. Fe(3+) ion importer (TC 3.A.1.10) family. In terms of assembly, the complex is composed of two ATP-binding proteins (FbpC), two transmembrane proteins (FbpB) and a solute-binding protein (FbpA).

It is found in the cell inner membrane. It carries out the reaction Fe(3+)(out) + ATP + H2O = Fe(3+)(in) + ADP + phosphate + H(+). In terms of biological role, part of the ABC transporter complex FbpABC involved in Fe(3+) ions import. Responsible for energy coupling to the transport system. The polypeptide is Fe(3+) ions import ATP-binding protein FbpC (Pseudomonas fluorescens (strain ATCC BAA-477 / NRRL B-23932 / Pf-5)).